A 363-amino-acid polypeptide reads, in one-letter code: Jasmonate-induced oxygenase 3 (363 aa).

Positions 210-312 (ESGGCLRVNY…RLSLAFFYNP (103 aa)) constitute a Fe2OG dioxygenase domain. Arg216 is a binding site for jasmonate. 2-oxoglutarate contacts are provided by Asn218 and Tyr220. Residues His235, Asp237, and His293 each contribute to the Fe cation site. 2-oxoglutarate-binding residues include Arg303 and Ser305. Jasmonate-binding residues include Arg342 and Arg346.

This sequence belongs to the iron/ascorbate-dependent oxidoreductase family. L-ascorbate serves as cofactor. Requires Fe(2+) as cofactor.

The enzyme catalyses jasmonate + 2-oxoglutarate + O2 = (1R,2R)-12-hydroxyjasmonate + succinate + CO2. In terms of biological role, 2-oxoglutarate-dependent dioxygenase involved in the oxidation of jasmonate (JA), a stress-induced phytohormone synthesized in response to attack by pathogens and herbivores, which triggers the activation of defense responses via the JA-mediated signaling pathway. Converts JA to 12-hydroxyjasmonate (12OH-JA), an inactive form of JA. Is specific to free JA, and cannot oxidize the bioactive form jasmonoyl-L-isoleucine (JA-Ile) or other JA-amino acid conjugates. Prevents over-accumulation of JA and indirectly its bioactive form JA-Ile under stress response. Acts as a negative regulator of JA-mediated defense signaling, by contributing to 12OH-JA accumulation, which represses JA defense responses upon infection by the fungal pathogen Botrytis cinerea. Acts as a negative regulator of JA-mediated defense responses upon infestation by the herbivorous caterpillar Mamestra brassicae. This is Jasmonate-induced oxygenase 3 from Arabidopsis thaliana (Mouse-ear cress).